The sequence spans 231 residues: MMLSCLFLLKALLALGSLESWITAGEHAKEGECPPHKNPCKELCQGDELCPAEQKCCTTGCGRICRDIPKGRKRDCPRVIRKQSCLKRCITDETCPGVKKCCTLGCNKSCVVPISKQKLAEFGGECPADPLPCEELCDGDASCPQGHKCCSTGCGRTCLGDIEGGRGGDCPKVLVGLCIVGCVMDENCQAGEKCCKSGCGRFCVPPVLPPKLTMNPNWTVRSDSELEIPVP.

The N-terminal stretch at Met1 to Ala24 is a signal peptide. WAP domains lie at Glu26–Ile68, Pro69–Ile114, Leu119–Ile162, and Glu163–Val207. Cystine bridges form between Cys33–Cys57, Cys40–Cys61, Cys44–Cys56, Cys50–Cys65, Cys76–Cys102, Cys85–Cys106, Cys89–Cys101, Cys95–Cys110, Cys126–Cys150, Cys133–Cys154, Cys137–Cys149, Cys143–Cys158, Cys170–Cys195, Cys178–Cys199, Cys182–Cys194, and Cys188–Cys203. The N-linked (GlcNAc...) asparagine glycan is linked to Asn107. Asn217 is a glycosylation site (N-linked (GlcNAc...) asparagine).

As to expression, ubiquitously expressed.

Its subcellular location is the secreted. The protein is WAP four-disulfide core domain protein 3 (WFDC3) of Homo sapiens (Human).